Consider the following 377-residue polypeptide: Chaperone protein DnaJ (377 aa).

The J domain occupies 5-70 (DYYEILGVSK…EKRSAYDQYG (66 aa)). The segment at 131–209 (GVVREICVPT…CRGSGRIERT (79 aa)) adopts a CR-type zinc-finger fold. Residues Cys144, Cys147, Cys161, Cys164, Cys183, Cys186, Cys197, and Cys200 each contribute to the Zn(2+) site. 4 CXXCXGXG motif repeats span residues 144-151 (CLQCRGSG), 161-168 (CVTCHGHG), 183-190 (CPSCNGHG), and 197-204 (CNKCRGSG).

The protein belongs to the DnaJ family. Homodimer. Zn(2+) serves as cofactor.

It is found in the cytoplasm. Functionally, participates actively in the response to hyperosmotic and heat shock by preventing the aggregation of stress-denatured proteins and by disaggregating proteins, also in an autonomous, DnaK-independent fashion. Unfolded proteins bind initially to DnaJ; upon interaction with the DnaJ-bound protein, DnaK hydrolyzes its bound ATP, resulting in the formation of a stable complex. GrpE releases ADP from DnaK; ATP binding to DnaK triggers the release of the substrate protein, thus completing the reaction cycle. Several rounds of ATP-dependent interactions between DnaJ, DnaK and GrpE are required for fully efficient folding. Also involved, together with DnaK and GrpE, in the DNA replication of plasmids through activation of initiation proteins. This chain is Chaperone protein DnaJ, found in Blochmanniella floridana.